The following is a 149-amino-acid chain: Large ribosomal subunit protein bL9 (149 aa).

It belongs to the bacterial ribosomal protein bL9 family.

Its function is as follows. Binds to the 23S rRNA. This chain is Large ribosomal subunit protein bL9, found in Salmonella dublin (strain CT_02021853).